The sequence spans 294 residues: Energy-coupling factor transporter ATP-binding protein EcfA1 (294 aa).

One can recognise an ABC transporter domain in the interval I27–D260. G60–S67 is an ATP binding site.

It belongs to the ABC transporter superfamily. Energy-coupling factor EcfA family. Forms a stable energy-coupling factor (ECF) transporter complex composed of 2 membrane-embedded substrate-binding proteins (S component), 2 ATP-binding proteins (A component) and 2 transmembrane proteins (T component).

The protein localises to the cell membrane. Its function is as follows. ATP-binding (A) component of a common energy-coupling factor (ECF) ABC-transporter complex. Unlike classic ABC transporters this ECF transporter provides the energy necessary to transport a number of different substrates. This chain is Energy-coupling factor transporter ATP-binding protein EcfA1, found in Ureaplasma parvum serovar 3 (strain ATCC 700970).